Consider the following 842-residue polypeptide: Histidine biosynthesis trifunctional protein (842 aa).

The phosphoribosyl-AMP cyclohydrolase stretch occupies residues 1 to 275 (MTFPLLPAYA…FVVEQTGVGF (275 aa)). A phosphoribosyl-ATP pyrophosphohydrolase region spans residues 276–357 (CHLERTSCFG…FYFALVRCAK (82 aa)). The interval 358 to 842 (YGVTLDEVER…KVRMEKLGLI (485 aa)) is histidinol dehydrogenase. The disordered stretch occupies residues 380–403 (KGDAKPGYTKEQPKEESKPKEVPS). The span at 390–403 (EQPKEESKPKEVPS) shows a compositional bias: basic and acidic residues. 2 residues coordinate Zn(2+): Gln-667 and His-670. Catalysis depends on residues Glu-736 and His-737. Zn(2+) contacts are provided by Asp-769 and His-828.

The protein in the C-terminal section; belongs to the histidinol dehydrogenase family. The cofactor is Zn(2+).

It carries out the reaction 1-(5-phospho-beta-D-ribosyl)-5'-AMP + H2O = 1-(5-phospho-beta-D-ribosyl)-5-[(5-phospho-beta-D-ribosylamino)methylideneamino]imidazole-4-carboxamide. The enzyme catalyses 1-(5-phospho-beta-D-ribosyl)-ATP + H2O = 1-(5-phospho-beta-D-ribosyl)-5'-AMP + diphosphate + H(+). The catalysed reaction is L-histidinol + 2 NAD(+) + H2O = L-histidine + 2 NADH + 3 H(+). It functions in the pathway amino-acid biosynthesis; L-histidine biosynthesis; L-histidine from 5-phospho-alpha-D-ribose 1-diphosphate: step 2/9. The protein operates within amino-acid biosynthesis; L-histidine biosynthesis; L-histidine from 5-phospho-alpha-D-ribose 1-diphosphate: step 3/9. Its pathway is amino-acid biosynthesis; L-histidine biosynthesis; L-histidine from 5-phospho-alpha-D-ribose 1-diphosphate: step 9/9. The chain is Histidine biosynthesis trifunctional protein (HIS4) from Komagataella pastoris (Yeast).